We begin with the raw amino-acid sequence, 303 residues long: Protein REVEILLE 5 (303 aa).

In terms of domain architecture, HTH myb-type spans 54 to 108 (TIKKSRENWTDQEHDKFLEALHLFDRDWKKIEAFVGSKTVVQIRSHAQKYFLKVQ). A DNA-binding region (H-T-H motif) is located at residues 81–104 (WKKIEAFVGSKTVVQIRSHAQKYF). The segment at 109-130 (KSGANEHLPPPRPKRKASHPYP) is disordered.

It localises to the nucleus. Probable transcription factor. The sequence is that of Protein REVEILLE 5 (RVE5) from Arabidopsis thaliana (Mouse-ear cress).